The primary structure comprises 337 residues: Putative transcription activator protein HfaB (337 aa).

Polar residues predominate over residues 303-313 (AYNNLGTNNAQ). The disordered stretch occupies residues 303 to 337 (AYNNLGTNNAQTRDDPSRWNARRDPDIRDAKRGRY). Residues 314-337 (TRDDPSRWNARRDPDIRDAKRGRY) show a composition bias toward basic and acidic residues.

Required for the attachment of the holdfast to the cell. May be involved in the positive regulation of hfaC. The protein is Putative transcription activator protein HfaB (hfaB) of Caulobacter vibrioides (strain ATCC 19089 / CIP 103742 / CB 15) (Caulobacter crescentus).